The primary structure comprises 338 residues: DNA-directed RNA polymerase subunit alpha (338 aa).

The interval Met1–Asn225 is alpha N-terminal domain (alpha-NTD). Residues Thr240–Glu338 form an alpha C-terminal domain (alpha-CTD) region. Positions Leu319 to Glu338 are disordered.

This sequence belongs to the RNA polymerase alpha chain family. In terms of assembly, homodimer. The RNAP catalytic core consists of 2 alpha, 1 beta, 1 beta' and 1 omega subunit. When a sigma factor is associated with the core the holoenzyme is formed, which can initiate transcription.

The enzyme catalyses RNA(n) + a ribonucleoside 5'-triphosphate = RNA(n+1) + diphosphate. Its function is as follows. DNA-dependent RNA polymerase catalyzes the transcription of DNA into RNA using the four ribonucleoside triphosphates as substrates. This chain is DNA-directed RNA polymerase subunit alpha, found in Corynebacterium glutamicum (strain R).